The chain runs to 511 residues: TNF receptor-associated factor family protein DDB_G0290931 (511 aa).

The RING-type; degenerate zinc-finger motif lies at C27–R67. Residues I103–G169 are a coiled coil. Residues N107–K159 are disordered. The segment covering E109–E155 has biased composition (acidic residues). TRAF-type zinc fingers lie at residues R181–L234 and N236–Q293. Residues E324–Y358 are a coiled coil. Residues G374 to V499 form the MATH domain.

This sequence belongs to the TNF receptor-associated factor family. A subfamily.

The protein localises to the cytoplasm. In terms of biological role, probable adapter protein and signal transducer that links members of the tumor necrosis factor receptor family to different signaling pathways by association with the receptor cytoplasmic domain and kinases. The sequence is that of TNF receptor-associated factor family protein DDB_G0290931 from Dictyostelium discoideum (Social amoeba).